Reading from the N-terminus, the 560-residue chain is Eukaryotic translation initiation factor 3 subunit D-1 (560 aa).

Residues 98-166 (VQKPPHQRGR…RGPPPKMRES (69 aa)) are disordered. Basic residues predominate over residues 100 to 121 (KPPHQRGRFRNMRNSRSGRGRN). T128 carries the phosphothreonine modification. A compositionally biased stretch (basic residues) spans 147-156 (GRGMGKKFGH). The interval 291-305 (EFDLLTVNESSVEPP) is RNA gate.

This sequence belongs to the eIF-3 subunit D family. Component of the eukaryotic translation initiation factor 3 (eIF-3) complex. The eIF-3 complex interacts with pix.

It localises to the cytoplasm. Functionally, mRNA cap-binding component of the eukaryotic translation initiation factor 3 (eIF-3) complex, which is involved in protein synthesis of a specialized repertoire of mRNAs and, together with other initiation factors, stimulates binding of mRNA and methionyl-tRNAi to the 40S ribosome. The eIF-3 complex specifically targets and initiates translation of a subset of mRNAs involved in cell proliferation. In the eIF-3 complex, eif3d specifically recognizes and binds the 7-methylguanosine cap of a subset of mRNAs. This is Eukaryotic translation initiation factor 3 subunit D-1 from Drosophila yakuba (Fruit fly).